Reading from the N-terminus, the 161-residue chain is uncharacterized protein (161 aa).

Helical transmembrane passes span 13 to 35 (VAAV…PHAN) and 40 to 62 (VFSA…PFIS).

It is found in the cell membrane. This is an uncharacterized protein from Archaeoglobus fulgidus (strain ATCC 49558 / DSM 4304 / JCM 9628 / NBRC 100126 / VC-16).